Reading from the N-terminus, the 100-residue chain is MITEERILTVLRAPHISEKATMAAESANTIVFKVAITATKREIKAAVEKLFEVEVKSVNTLVAKGKTKSQGARQGRRSDWKKAYVILKEGQDIDFAGSAE.

The protein belongs to the universal ribosomal protein uL23 family. Part of the 50S ribosomal subunit. Contacts protein L29, and trigger factor when it is bound to the ribosome.

Functionally, one of the early assembly proteins it binds 23S rRNA. One of the proteins that surrounds the polypeptide exit tunnel on the outside of the ribosome. Forms the main docking site for trigger factor binding to the ribosome. This is Large ribosomal subunit protein uL23 from Photobacterium profundum (strain SS9).